Reading from the N-terminus, the 413-residue chain is Gamma-glutamyl phosphate reductase (413 aa).

It belongs to the gamma-glutamyl phosphate reductase family.

It localises to the cytoplasm. The catalysed reaction is L-glutamate 5-semialdehyde + phosphate + NADP(+) = L-glutamyl 5-phosphate + NADPH + H(+). The protein operates within amino-acid biosynthesis; L-proline biosynthesis; L-glutamate 5-semialdehyde from L-glutamate: step 2/2. Catalyzes the NADPH-dependent reduction of L-glutamate 5-phosphate into L-glutamate 5-semialdehyde and phosphate. The product spontaneously undergoes cyclization to form 1-pyrroline-5-carboxylate. This chain is Gamma-glutamyl phosphate reductase, found in Thermus thermophilus (strain ATCC BAA-163 / DSM 7039 / HB27).